Consider the following 303-residue polypeptide: MADKSKFIDYIDDALEKSKETTLSQLFLTYQGIPYPVTMCTQETFRALDAFEARSDDVLLASYPKCGSNWILHIVSELIFAVSKKKYACPEFPVLECGDAEKYQRMKLFPSPRILTTHLHYDKLPQSIFKNKAKILVIFRNPKDTAVSFFHFHNDVPDIPSYASWDEFFRQFIKGQVSWGSYFDFAINWNKHIDDENVKFILYEDLKENLVVGIKQISEFLGFSLTDEQIETISTQSTFLAMRANSQETHGAIGPFLFRKGEVGDWKRLFNETQNQEMDERFKECLAGTSLGDKLKYEAYCLA.

Residue 65 to 70 coordinates 3'-phosphoadenylyl sulfate; the sequence is KCGSNW. The Proton acceptor role is filled by H118. 3'-phosphoadenylyl sulfate is bound by residues R140, S148, Y203, 237–242, and 259–261; these read STFLAM and RKG.

The protein belongs to the sulfotransferase 1 family. As to expression, expressed in brain, heart, kidney, thymus, lung, liver and testis.

The protein resides in the cytoplasm. It localises to the cytosol. The enzyme catalyses thyroxine + 3'-phosphoadenylyl sulfate = thyroxine sulfate + adenosine 3',5'-bisphosphate + H(+). In terms of biological role, sulfotransferase that utilizes 3'-phospho-5'-adenylyl sulfate (PAPS) as sulfonate donor to catalyze the sulfate conjugation of thyroxine. Involved in the metabolism of thyroxine. In Mus musculus (Mouse), this protein is Sulfotransferase 6B1 (Sult6b1).